We begin with the raw amino-acid sequence, 538 residues long: MEIKEISVPQQGVVADYMNGKKEIQSCFDYMLTEDAFKQRVQDLREREFFRQDLVTHLLEYNTKLQAGEATIQNVKALGDENTYVVIAGQQAGLLTGPLYTIHKIISVLQLAKEKEESLGVKVVPVFWIAGEDHDMDEINHTFVTKNKKIKKTIFHDRNPKKASASESELSLEDCRKWIEEIFKTYPETNFTKDVLQFIDDSLRKSNTYVDFFGHLIMKMFVNSGLILVDSHHPELRKLEVPFFKQIVSKYKEVQEGLHNQQRVIKELGYKPIIETKSNAVHIFMEIDNERVLLEDNQGKFVGKDGTYSFSYKELIEEMERSPERFSNNVVTRPLMQEYVFPTLAFIGGPGELAYWSELQQVFHTIGFRMPPVVPRITITYIERDIATDLHDLQLQESDPFFNNVDKLRENWLSNQIEEPIDERFVEAKKEIIDIHKSLQQFVKKIDPGLSAFAGKNEFKINEQIELLERMLKRNVEKKHEVELNKFRRIQFALRPLGAPQERVWNVCYYLNQFGLDFVDRVMEKPFSWNGKHHVIKL.

Residues K460 to L484 are a coiled coil.

This sequence belongs to the BshC family.

Involved in bacillithiol (BSH) biosynthesis. May catalyze the last step of the pathway, the addition of cysteine to glucosamine malate (GlcN-Mal) to generate BSH. The sequence is that of Putative cysteine ligase BshC from Bacillus anthracis (strain A0248).